The chain runs to 306 residues: MDIAVIGSNMVDLITYTNQMPKEGETLEAPAFKIGCGGKGANQAVAAAKLNSKVLMLTKVGDDIFADNTIRNLESWGINTTYVEKVPCTSSGVAPIFVNANSSNSILIIKGANKFLSPEDIDRAAEDLKKCQLIVLQLEVQLETVYHAIEFGKKHGIEVLLNPAPALRELDMSYACKCDFFVPNETELEILTGMPVDTYDHIRAAARSLVDKGLNNIIVTMGEKGALWMTRDQEVHVPAFRVNAVDTSGAGDAFIGCFAHYYVQSGDVEAAMKKAVLFAAFSVTGKGTQSSYPSIEQFNEYLSLNE.

Residues 10-12 (MVD), 38-42 (GKGAN), and Glu139 each bind substrate. ATP contacts are provided by residues Asn184 and 220-225 (TMGEKG). 2 residues coordinate K(+): Asp246 and Ser248. 251–252 (GD) contributes to the ATP binding site. Residue Asp252 participates in substrate binding. Asp252 acts as the Proton acceptor in catalysis. Ser282, Gly285, Gly287, and Ser291 together coordinate K(+).

The protein belongs to the carbohydrate kinase PfkB family. Deoxyribokinase subfamily. As to quaternary structure, homodimer. The cofactor is Mg(2+).

The protein resides in the cytoplasm. The catalysed reaction is 2-deoxy-D-ribose + ATP = 2-deoxy-D-ribose 5-phosphate + ADP + H(+). In terms of biological role, catalyzes the ATP-dependent phosphorylation of 2-deoxy-D-ribose to 2-deoxy-D-ribose 5-phosphate (dRib-5P), allowing the use of deoxyribose as the sole carbon source. Can also use D-ribose, with much lower efficiency. The protein is Deoxyribokinase of Salmonella typhi.